Here is a 263-residue protein sequence, read N- to C-terminus: tRNA (guanine-N(7)-)-methyltransferase (263 aa).

Residues 1–33 form a disordered region; that stretch reads MSDHGRMHSTGSEVAAPVAPDPDTEGVHPHFNR. The S-adenosyl-L-methionine site is built by Glu89, Glu114, Asp146, and Asp169. The active site involves Asp169. Substrate-binding positions include Lys173, Asp205, and 242 to 245; that span reads TKYE.

Belongs to the class I-like SAM-binding methyltransferase superfamily. TrmB family.

It carries out the reaction guanosine(46) in tRNA + S-adenosyl-L-methionine = N(7)-methylguanosine(46) in tRNA + S-adenosyl-L-homocysteine. It functions in the pathway tRNA modification; N(7)-methylguanine-tRNA biosynthesis. Its function is as follows. Catalyzes the formation of N(7)-methylguanine at position 46 (m7G46) in tRNA. This is tRNA (guanine-N(7)-)-methyltransferase from Mycolicibacterium gilvum (strain PYR-GCK) (Mycobacterium gilvum (strain PYR-GCK)).